We begin with the raw amino-acid sequence, 366 residues long: NADP-dependent isopropanol dehydrogenase (366 aa).

Zn(2+) is bound by residues cysteine 43, histidine 65, glutamate 66, and aspartate 156. NADP(+) contacts are provided by residues 181–184 (IGPV), 204–206 (GSR), tyrosine 224, 271–273 (VNY), and lysine 346.

Belongs to the zinc-containing alcohol dehydrogenase family. In terms of assembly, homodimer. The cofactor is Zn(2+).

Its subcellular location is the cytoplasm. The catalysed reaction is propan-2-ol + NADP(+) = acetone + NADPH + H(+). Functionally, alcohol dehydrogenase with a preference for medium chain secondary alcohols, such as 2-butanol and isopropanol. Has very low activity with primary alcohols, such as ethanol. Under physiological conditions, the enzyme reduces aldehydes and 2-ketones to produce secondary alcohols. Is also active with acetaldehyde and propionaldehyde. The polypeptide is NADP-dependent isopropanol dehydrogenase (Entamoeba histolytica (strain ATCC 30459 / HM-1:IMSS / ABRM)).